The primary structure comprises 60 residues: Large ribosomal subunit protein bL32 (60 aa).

A disordered region spans residues 1-28; it reads MAVQQNKKSRSARDMRRSHDALEASTLS. Residues 11-22 show a composition bias toward basic and acidic residues; that stretch reads SARDMRRSHDAL.

The protein belongs to the bacterial ribosomal protein bL32 family.

The protein is Large ribosomal subunit protein bL32 of Pseudomonas savastanoi pv. phaseolicola (strain 1448A / Race 6) (Pseudomonas syringae pv. phaseolicola (strain 1448A / Race 6)).